The following is a 310-amino-acid chain: tRNA dimethylallyltransferase (310 aa).

12 to 19 provides a ligand contact to ATP; that stretch reads GPTATGKT. Residue 14 to 19 participates in substrate binding; sequence TATGKT. Residues 37–40 form an interaction with substrate tRNA region; it reads DSMM.

It belongs to the IPP transferase family. Monomer. Mg(2+) serves as cofactor.

The enzyme catalyses adenosine(37) in tRNA + dimethylallyl diphosphate = N(6)-dimethylallyladenosine(37) in tRNA + diphosphate. Its function is as follows. Catalyzes the transfer of a dimethylallyl group onto the adenine at position 37 in tRNAs that read codons beginning with uridine, leading to the formation of N6-(dimethylallyl)adenosine (i(6)A). The chain is tRNA dimethylallyltransferase from Desulforudis audaxviator (strain MP104C).